Consider the following 117-residue polypeptide: Large ribosomal subunit protein uL18 (117 aa).

Belongs to the universal ribosomal protein uL18 family. In terms of assembly, part of the 50S ribosomal subunit; part of the 5S rRNA/L5/L18/L25 subcomplex. Contacts the 5S and 23S rRNAs.

This is one of the proteins that bind and probably mediate the attachment of the 5S RNA into the large ribosomal subunit, where it forms part of the central protuberance. The chain is Large ribosomal subunit protein uL18 from Yersinia pseudotuberculosis serotype O:1b (strain IP 31758).